The chain runs to 238 residues: MNVALIFAGGVGTRMQNSTKPKQFLELYNKPVIIYTLEKFEENKNIDAIVVVCVEPWIDYLRKLLFKFDIQKVKFVIPGGETGQESIFNGLCKIEEEFDHNSVVLIHDGVRPLINDEIINRNIEAVKSHGSAITTCPPVETFVLVDNEDVVKDVHDRSLSRLAKAPQSFYLRDILKVHRQAREDCYTEAIDSCSLMTKYGYDVRLVSGISENIKITSPIDFFIFKAIIDTQENLQVFG.

CTP contacts are provided by residues 7-10 (FAGG) and 80-86 (GETGQES).

The protein belongs to the IspD/TarI cytidylyltransferase family. TarI subfamily.

The enzyme catalyses D-ribitol 5-phosphate + CTP + H(+) = CDP-L-ribitol + diphosphate. In terms of biological role, catalyzes the transfer of the cytidylyl group of CTP to D-ribitol 5-phosphate. This chain is Ribitol-5-phosphate cytidylyltransferase, found in Vibrio parahaemolyticus serotype O3:K6 (strain RIMD 2210633).